The sequence spans 313 residues: Dihydroorotate dehydrogenase B (NAD(+)), catalytic subunit (313 aa).

FMN is bound by residues S21 and 45 to 46; that span reads KA. Residues K45 and 69–73 each bind substrate; that span reads NAIGL. Residues N99 and N127 each coordinate FMN. N127 is a binding site for substrate. C130 (nucleophile) is an active-site residue. FMN-binding residues include K165 and I191. 192-193 is a substrate binding site; that stretch reads NT. FMN contacts are provided by residues G217, 243-244, and 265-266; these read GG and GT.

This sequence belongs to the dihydroorotate dehydrogenase family. Type 1 subfamily. As to quaternary structure, heterotetramer of 2 PyrK and 2 PyrD type B subunits. Requires FMN as cofactor.

The protein resides in the cytoplasm. The catalysed reaction is (S)-dihydroorotate + NAD(+) = orotate + NADH + H(+). The protein operates within pyrimidine metabolism; UMP biosynthesis via de novo pathway; orotate from (S)-dihydroorotate (NAD(+) route): step 1/1. Its function is as follows. Catalyzes the conversion of dihydroorotate to orotate with NAD(+) as electron acceptor. The chain is Dihydroorotate dehydrogenase B (NAD(+)), catalytic subunit (pyrD) from Geobacillus sp. (strain WCH70).